Reading from the N-terminus, the 463-residue chain is Metacaspase-1 (463 aa).

Residues 1–149 (MSWNQYPGGG…PQLQGQGGQS (149 aa)) form a disordered region. Gly residues predominate over residues 7-18 (PGGGHHQQGGYG). Over residues 20-56 (RPPPPQWAQQGPPPPPNMGYRPPPPPQAYYNNPPPPQ) the composition is skewed to pro residues. Over residues 57 to 83 (QYQRPAPQQNGYQQGGYQQQQQSQGNY) the composition is skewed to low complexity. Catalysis depends on residues H247 and C309.

Belongs to the peptidase C14B family.

Its function is as follows. Involved in cell death (apoptosis). This is Metacaspase-1 (MCA1) from Cryptococcus neoformans var. neoformans serotype D (strain B-3501A) (Filobasidiella neoformans).